A 461-amino-acid chain; its full sequence is Bifunctional protein HldE (461 aa).

Residues M1–T311 form a ribokinase region. N191 to E194 serves as a coordination point for ATP. D260 is a catalytic residue. The cytidylyltransferase stretch occupies residues F332–D461.

In the N-terminal section; belongs to the carbohydrate kinase PfkB family. This sequence in the C-terminal section; belongs to the cytidylyltransferase family. Homodimer.

The catalysed reaction is D-glycero-beta-D-manno-heptose 7-phosphate + ATP = D-glycero-beta-D-manno-heptose 1,7-bisphosphate + ADP + H(+). It catalyses the reaction D-glycero-beta-D-manno-heptose 1-phosphate + ATP + H(+) = ADP-D-glycero-beta-D-manno-heptose + diphosphate. It participates in nucleotide-sugar biosynthesis; ADP-L-glycero-beta-D-manno-heptose biosynthesis; ADP-L-glycero-beta-D-manno-heptose from D-glycero-beta-D-manno-heptose 7-phosphate: step 1/4. It functions in the pathway nucleotide-sugar biosynthesis; ADP-L-glycero-beta-D-manno-heptose biosynthesis; ADP-L-glycero-beta-D-manno-heptose from D-glycero-beta-D-manno-heptose 7-phosphate: step 3/4. Its function is as follows. Catalyzes the phosphorylation of D-glycero-D-manno-heptose 7-phosphate at the C-1 position to selectively form D-glycero-beta-D-manno-heptose-1,7-bisphosphate. In terms of biological role, catalyzes the ADP transfer from ATP to D-glycero-beta-D-manno-heptose 1-phosphate, yielding ADP-D-glycero-beta-D-manno-heptose. In Helicobacter pylori (strain P12), this protein is Bifunctional protein HldE.